Reading from the N-terminus, the 285-residue chain is RNA polymerase sigma factor RpoH (285 aa).

The segment at 53–122 is sigma-70 factor domain-2; it reads LILSHLRFVV…IHEYVLRNWR (70 aa). Positions 77–80 match the Interaction with polymerase core subunit RpoC motif; it reads DLVQ. Positions 229–280 are sigma-70 factor domain-4; that stretch reads ALASLDERSQHIVRSRWLDDDKATLQDLAEMYGVSAERIRQLEKNAMKKLKM. Positions 253-272 form a DNA-binding region, H-T-H motif; it reads LQDLAEMYGVSAERIRQLEK.

It belongs to the sigma-70 factor family. RpoH subfamily. In terms of assembly, interacts with the RNA polymerase core enzyme.

It is found in the cytoplasm. Functionally, sigma factors are initiation factors that promote the attachment of RNA polymerase to specific initiation sites and are then released. This sigma factor is involved in regulation of expression of heat shock genes. This chain is RNA polymerase sigma factor RpoH, found in Vibrio vulnificus (strain CMCP6).